An 889-amino-acid chain; its full sequence is Alanine--tRNA ligase (889 aa).

Zn(2+)-binding residues include His-574, His-578, Cys-682, and His-686.

It belongs to the class-II aminoacyl-tRNA synthetase family. Zn(2+) serves as cofactor.

It localises to the cytoplasm. The enzyme catalyses tRNA(Ala) + L-alanine + ATP = L-alanyl-tRNA(Ala) + AMP + diphosphate. In terms of biological role, catalyzes the attachment of alanine to tRNA(Ala) in a two-step reaction: alanine is first activated by ATP to form Ala-AMP and then transferred to the acceptor end of tRNA(Ala). Also edits incorrectly charged Ser-tRNA(Ala) and Gly-tRNA(Ala) via its editing domain. The protein is Alanine--tRNA ligase of Orientia tsutsugamushi (strain Ikeda) (Rickettsia tsutsugamushi).